Here is a 451-residue protein sequence, read N- to C-terminus: Tryptophan--tRNA ligase (451 aa).

Residues 10–12 (TTT) and 18–19 (GN) each bind ATP. Positions 11–19 (TTGTPHLGN) match the 'HIGH' region motif. Aspartate 143 is a binding site for L-tryptophan. Residues 155–157 (GRD), leucine 195, and 202–206 (KMSKS) contribute to the ATP site. Residues 202–206 (KMSKS) carry the 'KMSKS' region motif.

It belongs to the class-I aminoacyl-tRNA synthetase family. As to quaternary structure, homodimer.

It is found in the cytoplasm. The enzyme catalyses tRNA(Trp) + L-tryptophan + ATP = L-tryptophyl-tRNA(Trp) + AMP + diphosphate + H(+). Its function is as follows. Catalyzes the attachment of tryptophan to tRNA(Trp). The polypeptide is Tryptophan--tRNA ligase (Bordetella pertussis (strain Tohama I / ATCC BAA-589 / NCTC 13251)).